The following is a 76-amino-acid chain: Exodeoxyribonuclease 7 small subunit (76 aa).

This sequence belongs to the XseB family. In terms of assembly, heterooligomer composed of large and small subunits.

The protein resides in the cytoplasm. It catalyses the reaction Exonucleolytic cleavage in either 5'- to 3'- or 3'- to 5'-direction to yield nucleoside 5'-phosphates.. In terms of biological role, bidirectionally degrades single-stranded DNA into large acid-insoluble oligonucleotides, which are then degraded further into small acid-soluble oligonucleotides. The protein is Exodeoxyribonuclease 7 small subunit of Methylococcus capsulatus (strain ATCC 33009 / NCIMB 11132 / Bath).